A 121-amino-acid polypeptide reads, in one-letter code: Large ribosomal subunit protein bL20 (121 aa).

It belongs to the bacterial ribosomal protein bL20 family.

In terms of biological role, binds directly to 23S ribosomal RNA and is necessary for the in vitro assembly process of the 50S ribosomal subunit. It is not involved in the protein synthesizing functions of that subunit. In Petrotoga mobilis (strain DSM 10674 / SJ95), this protein is Large ribosomal subunit protein bL20.